A 113-amino-acid polypeptide reads, in one-letter code: MTSIIFSAKDIFEQEFGREVRGYSKVEVDEFLDDVIKDYETYATLVKSLRQEIADLKEELTRKPQVSSAPSPSHPDPIDVAASSSMTNFDILKRLNRLEKEVFGKQILDNTDL.

Positions Lys37–Lys63 form a coiled coil. Positions Thr61–Ala82 are disordered.

It belongs to the GpsB family. Forms polymers through the coiled coil domains. Interacts with PBP1, MreC and EzrA.

It localises to the cytoplasm. Divisome component that associates with the complex late in its assembly, after the Z-ring is formed, and is dependent on DivIC and PBP2B for its recruitment to the divisome. Together with EzrA, is a key component of the system that regulates PBP1 localization during cell cycle progression. Its main role could be the removal of PBP1 from the cell pole after pole maturation is completed. Also contributes to the recruitment of PBP1 to the division complex. Not essential for septum formation. The protein is Cell cycle protein GpsB of Streptococcus pneumoniae (strain ATCC 700669 / Spain 23F-1).